The following is a 30-amino-acid chain: Thermophilic aminopeptidase 1 alpha chain (30 aa).

The protein belongs to the peptidase M42 family. As to quaternary structure, 12 chains of two different but homologous types, alpha and beta, which can combine in various ratios. It depends on a divalent metal cation as a cofactor.

Metalloenzyme of broad specificity, releasing all N-terminal amino acids. In Geobacillus stearothermophilus (Bacillus stearothermophilus), this protein is Thermophilic aminopeptidase 1 alpha chain.